A 226-amino-acid chain; its full sequence is Tyramine N-feruloyltransferase 4/11 (226 aa).

Positions 29-45 (HIYKLFYQIHEYHNYTH) are important in binding site and for catalytic activity. Residues 72–222 (VLLLEVSPTP…VGDALQKYAD (151 aa)) form the N-acetyltransferase domain.

Belongs to the acetyltransferase family. In terms of assembly, homodimer.

It is found in the cytoplasm. It carries out the reaction tyramine + (E)-feruloyl-CoA = N-[(E)-feruloyl]tyramine + CoA + H(+). With respect to regulation, inhibited by (2-hydroxyphenyl)amino sulfinyl acetic acid 1,1-dimethylethyl ester, by DEPC and by N-ethylmaleimide. Its function is as follows. Synthesizes amides which are involved in stress response in the cell wall. Catalyzes the synthesis of hydroxycinnamic acid amides from hydroxycinnamoyl-CoA thioesters and various hydroxyphenylethylamines such as 4-coumaroyl-CoA and sinapoyl-CoA. This chain is Tyramine N-feruloyltransferase 4/11 (THT4), found in Nicotiana tabacum (Common tobacco).